The following is a 177-amino-acid chain: Translation initiation factor IF-3 (177 aa).

It belongs to the IF-3 family. As to quaternary structure, monomer.

Its subcellular location is the cytoplasm. IF-3 binds to the 30S ribosomal subunit and shifts the equilibrium between 70S ribosomes and their 50S and 30S subunits in favor of the free subunits, thus enhancing the availability of 30S subunits on which protein synthesis initiation begins. This chain is Translation initiation factor IF-3, found in Elusimicrobium minutum (strain Pei191).